Reading from the N-terminus, the 481-residue chain is Glucan endo-1,3-beta-glucosidase 8 (481 aa).

The first 33 residues, 1 to 33 (MSNLLALVVGFVIVIGHLGILVNGLGVNWGTMA), serve as a signal peptide directing secretion. 2 N-linked (GlcNAc...) asparagine glycosylation sites follow: Asn99 and Asn110. The Proton donor role is filled by Glu119. Residues Asn126 and Asn131 are each glycosylated (N-linked (GlcNAc...) asparagine). The active-site Nucleophile is the Glu265. A disulfide bond links Cys367 and Cys428. 2 N-linked (GlcNAc...) asparagine glycosylation sites follow: Asn409 and Asn440. Ser455 carries the GPI-anchor amidated serine lipid modification. Residues 456 to 481 (SASSFSCSSYSLVVLIVWFLLSGMMF) constitute a propeptide, removed in mature form.

The protein belongs to the glycosyl hydrolase 17 family. In terms of processing, contains two additional disulfide bonds.

It localises to the secreted. The protein localises to the cell wall. The protein resides in the cell membrane. It catalyses the reaction Hydrolysis of (1-&gt;3)-beta-D-glucosidic linkages in (1-&gt;3)-beta-D-glucans.. The polypeptide is Glucan endo-1,3-beta-glucosidase 8 (Arabidopsis thaliana (Mouse-ear cress)).